A 362-amino-acid chain; its full sequence is 3-dehydroquinate synthase (362 aa).

NAD(+) contacts are provided by residues 70-75, 104-108, 128-129, Lys-141, and Lys-150; these read DGEKYK, GVIGD, and TT. The Zn(2+) site is built by Glu-183, His-246, and His-263.

The protein belongs to the sugar phosphate cyclases superfamily. Dehydroquinate synthase family. It depends on Co(2+) as a cofactor. The cofactor is Zn(2+). NAD(+) is required as a cofactor.

It localises to the cytoplasm. The enzyme catalyses 7-phospho-2-dehydro-3-deoxy-D-arabino-heptonate = 3-dehydroquinate + phosphate. It functions in the pathway metabolic intermediate biosynthesis; chorismate biosynthesis; chorismate from D-erythrose 4-phosphate and phosphoenolpyruvate: step 2/7. In terms of biological role, catalyzes the conversion of 3-deoxy-D-arabino-heptulosonate 7-phosphate (DAHP) to dehydroquinate (DHQ). The protein is 3-dehydroquinate synthase of Acinetobacter baylyi (strain ATCC 33305 / BD413 / ADP1).